We begin with the raw amino-acid sequence, 475 residues long: Cytosolic non-specific dipeptidase (475 aa).

Ala-2 is modified (N-acetylalanine). Residue Lys-9 is modified to N6-acetyllysine. The residue at position 58 (Ser-58) is a Phosphoserine. His-99 is a Mn(2+) binding site. The active site involves Asp-101. Mn(2+) is bound at residue Asp-132. Residue Glu-166 is the Proton acceptor of the active site. Residues 166–167 (EE), Asp-195, and His-228 each bind substrate. Mn(2+)-binding residues include Glu-167 and Asp-195. A Phosphoserine modification is found at Ser-299. Substrate-binding residues include Thr-330, Arg-343, Ser-417, and His-445. A Mn(2+)-binding site is contributed by His-445.

It belongs to the peptidase M20A family. In terms of assembly, homodimer. It depends on Mn(2+) as a cofactor. In terms of tissue distribution, ubiquitously expressed with higher levels in kidney and liver (at protein level). Expressed in peripheral blood leukocytes. Expressed in gastric mucosa and down-regulated in gastric cancer mucosal tissues (at protein level). Broadly expressed in fetal tissues. Expressed in adult liver and placenta.

It localises to the cytoplasm. It catalyses the reaction Hydrolysis of dipeptides, preferentially hydrophobic dipeptides including prolyl amino acids.. The catalysed reaction is L-threonyl-L-threonine + H2O = 2 L-threonine. It carries out the reaction L-threonyl-L-serine + H2O = L-threonine + L-serine. The enzyme catalyses L-seryl-L-threonine + H2O = L-threonine + L-serine. It catalyses the reaction L-cysteinylglycine + H2O = L-cysteine + glycine. The catalysed reaction is L-alanyl-L-cysteine + H2O = L-cysteine + L-alanine. It carries out the reaction (S)-lactate + L-phenylalanine = N-[(S)-lactoyl]-L-phenylalanine + H2O. Inhibited by p-hydroxymercurybenzoate. The inhibitory concentration 50% (IC(50)) is 13 uM. Inhibited by bestatin. The inhibitory concentration 50% (IC(50)) is 7 nM at pH 9.5. Functionally, catalyzes the peptide bond hydrolysis in dipeptides, displaying a non-redundant activity toward threonyl dipeptides. Mediates threonyl dipeptide catabolism in a tissue-specific way. Has high dipeptidase activity toward cysteinylglycine, an intermediate metabolite in glutathione metabolism. Metabolizes N-lactoyl-amino acids, both through hydrolysis to form lactic acid and amino acids, as well as through their formation by reverse proteolysis. Plays a role in the regulation of cell cycle arrest and apoptosis. This Homo sapiens (Human) protein is Cytosolic non-specific dipeptidase.